The sequence spans 225 residues: PKHD-type hydroxylase YbiX (225 aa).

In terms of domain architecture, Fe2OG dioxygenase spans 78–177 (TLSTPLFNRY…RVASFMWIQS (100 aa)). His-96, Asp-98, and His-158 together coordinate Fe cation. Residue Arg-168 participates in 2-oxoglutarate binding.

Fe(2+) is required as a cofactor. L-ascorbate serves as cofactor.

The polypeptide is PKHD-type hydroxylase YbiX (Escherichia coli O6:K15:H31 (strain 536 / UPEC)).